A 231-amino-acid chain; its full sequence is Ion-translocating oxidoreductase complex subunit E (231 aa).

6 consecutive transmembrane segments (helical) span residues 18-38 (ALVQ…ATNA), 39-59 (LGLG…ISTL), 63-83 (TPAE…VSAV), 86-106 (LINA…PLIV), 125-145 (ALSA…MFVL), and 182-202 (PFLL…MLAG).

Belongs to the NqrDE/RnfAE family. The complex is composed of six subunits: RsxA, RsxB, RsxC, RsxD, RsxE and RsxG.

It is found in the cell inner membrane. Part of a membrane-bound complex that couples electron transfer with translocation of ions across the membrane. Required to maintain the reduced state of SoxR. The polypeptide is Ion-translocating oxidoreductase complex subunit E (Shigella boydii serotype 18 (strain CDC 3083-94 / BS512)).